The following is a 220-amino-acid chain: Uracil-DNA glycosylase 1 (220 aa).

Asp65 acts as the Proton acceptor in catalysis.

This sequence belongs to the uracil-DNA glycosylase (UDG) superfamily. UNG family.

Its subcellular location is the cytoplasm. The catalysed reaction is Hydrolyzes single-stranded DNA or mismatched double-stranded DNA and polynucleotides, releasing free uracil.. Excises uracil residues from the DNA which can arise as a result of misincorporation of dUMP residues by DNA polymerase or due to deamination of cytosine. This Bacteroides fragilis (strain ATCC 25285 / DSM 2151 / CCUG 4856 / JCM 11019 / LMG 10263 / NCTC 9343 / Onslow / VPI 2553 / EN-2) protein is Uracil-DNA glycosylase 1.